The following is a 324-amino-acid chain: Zinc finger C2HC domain-containing protein 1A (324 aa).

The C2HC/C3H-type 1 zinc finger occupies 15 to 44; sequence ELLPCKICGRTFFPVALKKHGPICKKTATK. Zn(2+) contacts are provided by C19, C22, H34, and C38. Positions 43 to 83 are disordered; the sequence is TKKRKTFDSSRQRAEGTDIPTVKPLKPRPEPPKKPSNWRRK. Positions 48-58 are enriched in basic and acidic residues; sequence TFDSSRQRAEG. Residues 118–147 form a C2HC/C3H-type 2 zinc finger; that stretch reads DYIQCPYCQRRFNENAADRHINFCKEQAAR. C122, C125, H137, and C141 together coordinate Zn(2+). Disordered stretches follow at residues 150–224 and 236–259; these read NKGK…LSPS and NVKPRNSTPPSLARNPAPGVLTNK. Composition is skewed to low complexity over residues 176–187 and 196–215; these read SNSPGTASSGSS and GKTVVGVPSGKVSSSSSSLG. S222 carries the post-translational modification Phosphoserine. Residue T243 is modified to Phosphothreonine. A Phosphoserine modification is found at S291.

It belongs to the ZC2HC1 family. The cofactor is Zn(2+).

In Pongo abelii (Sumatran orangutan), this protein is Zinc finger C2HC domain-containing protein 1A (ZC2HC1A).